The following is a 155-amino-acid chain: 6,7-dimethyl-8-ribityllumazine synthase (155 aa).

5-amino-6-(D-ribitylamino)uracil contacts are provided by residues phenylalanine 23, 57-59, and 83-85; these read AFE and AVI. 88 to 89 is a (2S)-2-hydroxy-3-oxobutyl phosphate binding site; the sequence is AT. The Proton donor role is filled by histidine 91. 5-amino-6-(D-ribitylamino)uracil is bound at residue phenylalanine 114. Residue arginine 128 coordinates (2S)-2-hydroxy-3-oxobutyl phosphate.

The protein belongs to the DMRL synthase family.

The catalysed reaction is (2S)-2-hydroxy-3-oxobutyl phosphate + 5-amino-6-(D-ribitylamino)uracil = 6,7-dimethyl-8-(1-D-ribityl)lumazine + phosphate + 2 H2O + H(+). The protein operates within cofactor biosynthesis; riboflavin biosynthesis; riboflavin from 2-hydroxy-3-oxobutyl phosphate and 5-amino-6-(D-ribitylamino)uracil: step 1/2. In terms of biological role, catalyzes the formation of 6,7-dimethyl-8-ribityllumazine by condensation of 5-amino-6-(D-ribitylamino)uracil with 3,4-dihydroxy-2-butanone 4-phosphate. This is the penultimate step in the biosynthesis of riboflavin. The sequence is that of 6,7-dimethyl-8-ribityllumazine synthase from Leptospira biflexa serovar Patoc (strain Patoc 1 / Ames).